The primary structure comprises 275 residues: 4-hydroxy-3-methylbut-2-enyl diphosphate reductase (275 aa).

C12 is a binding site for [4Fe-4S] cluster. Residues H36 and H70 each contribute to the (2E)-4-hydroxy-3-methylbut-2-enyl diphosphate site. The dimethylallyl diphosphate site is built by H36 and H70. Residues H36 and H70 each contribute to the isopentenyl diphosphate site. Position 92 (C92) interacts with [4Fe-4S] cluster. Residue H120 participates in (2E)-4-hydroxy-3-methylbut-2-enyl diphosphate binding. A dimethylallyl diphosphate-binding site is contributed by H120. H120 lines the isopentenyl diphosphate pocket. The Proton donor role is filled by E122. T157 is a (2E)-4-hydroxy-3-methylbut-2-enyl diphosphate binding site. C185 lines the [4Fe-4S] cluster pocket. (2E)-4-hydroxy-3-methylbut-2-enyl diphosphate-binding residues include S213, S214, N215, and S257. Positions 213, 214, 215, and 257 each coordinate dimethylallyl diphosphate. S213, S214, N215, and S257 together coordinate isopentenyl diphosphate.

This sequence belongs to the IspH family. Requires [4Fe-4S] cluster as cofactor.

The catalysed reaction is isopentenyl diphosphate + 2 oxidized [2Fe-2S]-[ferredoxin] + H2O = (2E)-4-hydroxy-3-methylbut-2-enyl diphosphate + 2 reduced [2Fe-2S]-[ferredoxin] + 2 H(+). It carries out the reaction dimethylallyl diphosphate + 2 oxidized [2Fe-2S]-[ferredoxin] + H2O = (2E)-4-hydroxy-3-methylbut-2-enyl diphosphate + 2 reduced [2Fe-2S]-[ferredoxin] + 2 H(+). It participates in isoprenoid biosynthesis; dimethylallyl diphosphate biosynthesis; dimethylallyl diphosphate from (2E)-4-hydroxy-3-methylbutenyl diphosphate: step 1/1. Its pathway is isoprenoid biosynthesis; isopentenyl diphosphate biosynthesis via DXP pathway; isopentenyl diphosphate from 1-deoxy-D-xylulose 5-phosphate: step 6/6. Functionally, catalyzes the conversion of 1-hydroxy-2-methyl-2-(E)-butenyl 4-diphosphate (HMBPP) into a mixture of isopentenyl diphosphate (IPP) and dimethylallyl diphosphate (DMAPP). Acts in the terminal step of the DOXP/MEP pathway for isoprenoid precursor biosynthesis. The protein is 4-hydroxy-3-methylbut-2-enyl diphosphate reductase of Nitratiruptor sp. (strain SB155-2).